Consider the following 141-residue polypeptide: Protein archease (141 aa).

2 residues coordinate Ca(2+): D19 and D140.

It belongs to the archease family.

Activates the tRNA-splicing ligase complex by facilitating the enzymatic turnover of catalytic subunit RtcB. Acts by promoting the guanylylation of RtcB, a key intermediate step in tRNA ligation. Can also alter the NTP specificity of RtcB such that ATP, dGTP or ITP is used efficiently. The protein is Protein archease of Thermoplasma acidophilum (strain ATCC 25905 / DSM 1728 / JCM 9062 / NBRC 15155 / AMRC-C165).